Here is an 83-residue protein sequence, read N- to C-terminus: Mu-conotoxin-like PnMKLT1-014 (83 aa).

Positions 1–22 (MNLTCMMIVAVLFLTAWTFVMA) are cleaved as a signal peptide. The propeptide occupies 23-50 (DDSNNGLANLFSKSRYEMEDPEPSKLEK). 3 cysteine pairs are disulfide-bonded: cysteine 54/cysteine 72, cysteine 61/cysteine 77, and cysteine 71/cysteine 82.

Belongs to the conotoxin O1 superfamily. As to expression, expressed by the venom duct.

It localises to the secreted. In terms of biological role, mu-conotoxins block voltage-gated sodium channels (Nav). This chain is Mu-conotoxin-like PnMKLT1-014, found in Conus pennaceus (Feathered cone).